Here is a 98-residue protein sequence, read N- to C-terminus: Small proline-rich protein 2B (98 aa).

Repeat copies occupy residues proline 21–proline 29, proline 30–proline 38, proline 39–proline 47, proline 48–proline 56, and proline 57–proline 65. Residues proline 21 to proline 65 are 5 X 9 AA approximate tandem repeats.

The protein belongs to the cornifin (SPRR) family. Expressed in uterus.

It localises to the cytoplasm. Cross-linked envelope protein of keratinocytes. It is a keratinocyte protein that first appears in the cell cytosol, but ultimately becomes cross-linked to membrane proteins by transglutaminase. All that results in the formation of an insoluble envelope beneath the plasma membrane. This chain is Small proline-rich protein 2B (Sprr2b), found in Mus musculus (Mouse).